The following is a 92-amino-acid chain: MSRSVWKGPFVDGYLLKKAEEARSSEKRAVIKTWSRRSTILPQFVGLNFQVHNGNKFIPVTVTDEMVGHKLGEFAPTRTYYGHGADKKAKRK.

Belongs to the universal ribosomal protein uS19 family.

In terms of biological role, protein S19 forms a complex with S13 that binds strongly to the 16S ribosomal RNA. This is Small ribosomal subunit protein uS19 from Hyphomonas neptunium (strain ATCC 15444).